A 90-amino-acid polypeptide reads, in one-letter code: Small ribosomal subunit protein uS15 (90 aa).

This sequence belongs to the universal ribosomal protein uS15 family. As to quaternary structure, part of the 30S ribosomal subunit. Forms a bridge to the 50S subunit in the 70S ribosome, contacting the 23S rRNA.

Its function is as follows. One of the primary rRNA binding proteins, it binds directly to 16S rRNA where it helps nucleate assembly of the platform of the 30S subunit by binding and bridging several RNA helices of the 16S rRNA. In terms of biological role, forms an intersubunit bridge (bridge B4) with the 23S rRNA of the 50S subunit in the ribosome. This Wolbachia sp. subsp. Brugia malayi (strain TRS) protein is Small ribosomal subunit protein uS15.